Reading from the N-terminus, the 239-residue chain is Serine protease SplF (239 aa).

An N-terminal signal peptide occupies residues 1–36 (MNKNIIIKSIAALTILTSITGVGTTVVDGIQQTAKA). Catalysis depends on charge relay system residues histidine 75, aspartate 114, and serine 192.

The protein belongs to the peptidase S1B family.

It is found in the secreted. The polypeptide is Serine protease SplF (splF) (Staphylococcus aureus (strain MSSA476)).